The primary structure comprises 65 residues: MAMAIDGYECTVCGDCKPVCPTGSIVLQGGIYVIDADSCNECADLGEPRCLGVCPVDFCIQPLDD.

4Fe-4S ferredoxin-type domains lie at 2–29 (AMAI…VLQG) and 30–65 (GIYV…PLDD). Residues cysteine 10, cysteine 13, cysteine 16, cysteine 20, cysteine 39, cysteine 42, cysteine 50, and cysteine 54 each contribute to the [4Fe-4S] cluster site.

[4Fe-4S] cluster is required as a cofactor.

This Azotobacter chroococcum mcd 1 protein is Ferredoxin-like protein in vnf region.